The chain runs to 319 residues: Curved DNA-binding protein (319 aa).

One can recognise a J domain in the interval 5–69; the sequence is DYYKILGVEP…QKRAEFDEIR (65 aa).

It is found in the cytoplasm. The protein resides in the nucleoid. In terms of biological role, DNA-binding protein that preferentially recognizes a curved DNA sequence. It is probably a functional analog of DnaJ; displays overlapping activities with DnaJ, but functions under different conditions, probably acting as a molecular chaperone in an adaptive response to environmental stresses other than heat shock. Lacks autonomous chaperone activity; binds native substrates and targets them for recognition by DnaK. Its activity is inhibited by the binding of CbpM. This chain is Curved DNA-binding protein, found in Pseudomonas putida (strain ATCC 47054 / DSM 6125 / CFBP 8728 / NCIMB 11950 / KT2440).